Reading from the N-terminus, the 102-residue chain is Cytochrome c3 (102 aa).

Heme c contacts are provided by histidine 26, histidine 29, cysteine 34, cysteine 37, histidine 38, histidine 39, cysteine 50, cysteine 55, histidine 56, histidine 73, cysteine 81, cysteine 84, histidine 85, cysteine 95, cysteine 98, and histidine 99.

Heme is required as a cofactor.

The protein resides in the periplasm. Participates in sulfate respiration coupled with phosphorylation by transferring electrons from the enzyme dehydrogenase to ferredoxin. The sequence is that of Cytochrome c3 from Desulfovibrio desulfuricans.